Consider the following 306-residue polypeptide: MIRQRTLKSIVKATGVGLHGGRKVQLVLRPAAPDTGVVFHRVDLDPPCDLPADPYSVCDTRMCSGLERNGAKVGTVEHLMSAVAGLGVDNLHVDVDAPELPILDGSAGPFVFLLQSAGIEEQKAPKRFLRVKKAVEYREDDKWVRLEPHDGFRLTFSIVFNHPAIDKTSTSVTVDFAEHSYVRDVARARTFGFMQDVDSMRAHGLALGGSLDNAIVMDEYRVLNSDGLRYVDEFVKHKVLDAIGDLYLCGHPLLAAYSAHKAGHALNNQILRVLLEDRSAWEIATFEQPGMTPAAVSHQFELAPAT.

Zn(2+) is bound by residues His78, His237, and Asp241. The active-site Proton donor is the His264.

This sequence belongs to the LpxC family. Zn(2+) serves as cofactor.

It catalyses the reaction a UDP-3-O-[(3R)-3-hydroxyacyl]-N-acetyl-alpha-D-glucosamine + H2O = a UDP-3-O-[(3R)-3-hydroxyacyl]-alpha-D-glucosamine + acetate. It participates in glycolipid biosynthesis; lipid IV(A) biosynthesis; lipid IV(A) from (3R)-3-hydroxytetradecanoyl-[acyl-carrier-protein] and UDP-N-acetyl-alpha-D-glucosamine: step 2/6. Its function is as follows. Catalyzes the hydrolysis of UDP-3-O-myristoyl-N-acetylglucosamine to form UDP-3-O-myristoylglucosamine and acetate, the committed step in lipid A biosynthesis. This chain is UDP-3-O-acyl-N-acetylglucosamine deacetylase, found in Aromatoleum aromaticum (strain DSM 19018 / LMG 30748 / EbN1) (Azoarcus sp. (strain EbN1)).